The sequence spans 136 residues: Large ribosomal subunit protein uL16 (136 aa).

Belongs to the universal ribosomal protein uL16 family. In terms of assembly, part of the 50S ribosomal subunit.

Its function is as follows. Binds 23S rRNA and is also seen to make contacts with the A and possibly P site tRNAs. In Pasteurella multocida (strain Pm70), this protein is Large ribosomal subunit protein uL16.